Here is a 428-residue protein sequence, read N- to C-terminus: Glutamyl-tRNA reductase (428 aa).

Residues 49–52 (TCNR), S109, 114–116 (EGQ), and Q120 each bind substrate. Catalysis depends on C50, which acts as the Nucleophile. 189 to 194 (GAGKMS) provides a ligand contact to NADP(+).

This sequence belongs to the glutamyl-tRNA reductase family. Homodimer.

The catalysed reaction is (S)-4-amino-5-oxopentanoate + tRNA(Glu) + NADP(+) = L-glutamyl-tRNA(Glu) + NADPH + H(+). Its pathway is porphyrin-containing compound metabolism; protoporphyrin-IX biosynthesis; 5-aminolevulinate from L-glutamyl-tRNA(Glu): step 1/2. It functions in the pathway porphyrin-containing compound metabolism; chlorophyll biosynthesis. Its function is as follows. Catalyzes the NADPH-dependent reduction of glutamyl-tRNA(Glu) to glutamate 1-semialdehyde (GSA). This Trichormus variabilis (strain ATCC 29413 / PCC 7937) (Anabaena variabilis) protein is Glutamyl-tRNA reductase.